The sequence spans 214 residues: 3,4-dihydroxy-2-butanone 4-phosphate synthase (214 aa).

D-ribulose 5-phosphate contacts are provided by residues 37-38 (RE), Asp-42, 150-154 (RRGHT), and Glu-174. Glu-38 provides a ligand contact to Mg(2+). Mg(2+) is bound at residue His-153.

The protein belongs to the DHBP synthase family. In terms of assembly, homodimer. The cofactor is Mg(2+). Mn(2+) is required as a cofactor.

The enzyme catalyses D-ribulose 5-phosphate = (2S)-2-hydroxy-3-oxobutyl phosphate + formate + H(+). It functions in the pathway cofactor biosynthesis; riboflavin biosynthesis; 2-hydroxy-3-oxobutyl phosphate from D-ribulose 5-phosphate: step 1/1. Catalyzes the conversion of D-ribulose 5-phosphate to formate and 3,4-dihydroxy-2-butanone 4-phosphate. The polypeptide is 3,4-dihydroxy-2-butanone 4-phosphate synthase (Histophilus somni (strain 2336) (Haemophilus somnus)).